The primary structure comprises 262 residues: MSRHQARKRFGQHFLTDDSVVEAIVRAIAPARGDRVVEIGPGLSALTQPLLRGLDHLTVVEIDRDLAARLRNAHAPGRLTVIEADALTVDFASLGERLRVVGNLPYNISSPLLFHLMAAADTVRDQHFMLQREVIDRMVAAPGSADYGRLSVMLQSRYRMDKLFDVPPEAFDPPPRVVSAVVRMVPLPADRLRPASEAALQAVVARAFAQRRKMLRRGLGDWAALVPWDALDIAPTARAEEISVEKFIRLTDALLQAGAVPA.

Residues histidine 13, leucine 15, glycine 40, glutamate 61, aspartate 85, and asparagine 103 each coordinate S-adenosyl-L-methionine.

The protein belongs to the class I-like SAM-binding methyltransferase superfamily. rRNA adenine N(6)-methyltransferase family. RsmA subfamily.

The protein localises to the cytoplasm. The enzyme catalyses adenosine(1518)/adenosine(1519) in 16S rRNA + 4 S-adenosyl-L-methionine = N(6)-dimethyladenosine(1518)/N(6)-dimethyladenosine(1519) in 16S rRNA + 4 S-adenosyl-L-homocysteine + 4 H(+). Functionally, specifically dimethylates two adjacent adenosines (A1518 and A1519) in the loop of a conserved hairpin near the 3'-end of 16S rRNA in the 30S particle. May play a critical role in biogenesis of 30S subunits. This is Ribosomal RNA small subunit methyltransferase A from Bordetella petrii (strain ATCC BAA-461 / DSM 12804 / CCUG 43448).